Here is a 142-residue protein sequence, read N- to C-terminus: Heat shock protein HSP.16.4 (142 aa).

One can recognise a sHSP domain in the interval 27-142 (NLFNDLKSNL…KEIKTSIPIE (116 aa)).

This sequence belongs to the small heat shock protein (HSP20) family.

The protein localises to the cytoplasm. The polypeptide is Heat shock protein HSP.16.4 (Streptococcus thermophilus).